Here is a 2703-residue protein sequence, read N- to C-terminus: Serine/arginine repetitive matrix protein 2 (2703 aa).

Position 1 is an N-acetylmethionine (methionine 1). Positions 60–92 form a coiled coil; the sequence is HERKRRVELRCLELEEMMEEQGYEEQQIQEKVA. Lysine 101 carries the N6-acetyllysine modification. Glycyl lysine isopeptide (Lys-Gly) (interchain with G-Cter in SUMO2) cross-links involve residues lysine 108 and lysine 130. The disordered stretch occupies residues 141–1007; it reads ISDSYVDGSS…SGSFHLCPGV (867 aa). Tyrosine 145 bears the Phosphotyrosine mark. The residue at position 169 (lysine 169) is an N6-acetyllysine. Basic residues-rich tracts occupy residues 186–197 and 207–249; these read KQKKKKKKKDRG and RERK…KRSR. Positions 197–259 are sufficient for RNA-binding; the sequence is GRRSESSSPR…STTPAPKSRR (63 aa). A phosphoserine mark is found at serine 220 and serine 222. The span at 263–284 shows a compositional bias: low complexity; it reads STSADSASSSDTSRSRSRSAAA. Phosphoserine is present on residues serine 295, serine 300, serine 310, serine 322, and serine 323. Over residues 319–334 the composition is skewed to low complexity; the sequence is QQPSSPAPSTKQSSSP. Basic and acidic residues predominate over residues 335–345; that stretch reads YEDKDKKEKSA. Phosphoserine occurs at positions 349, 351, 355, and 356. Phosphothreonine occurs at positions 357 and 365. Phosphoserine is present on residues serine 375, serine 385, serine 393, serine 396, serine 402, serine 406, serine 422, serine 433, serine 434, serine 435, serine 438, serine 452, serine 482, serine 484, serine 503, serine 505, serine 507, serine 531, serine 533, and serine 540. Positions 383–396 are enriched in polar residues; that stretch reads PSSQEPVNPSSEAS. Residues 425–437 are compositionally biased toward polar residues; the sequence is PTKGSRHASSSPE. The segment covering 459 to 533 has biased composition (basic residues); that stretch reads NRSHGRAKRD…SPQRRGRSRS (75 aa). Residues 534–543 show a composition bias toward low complexity; the sequence is PQRPGWSRSR. 3 stretches are compositionally biased toward basic residues: residues 544-561, 568-721, and 730-740; these read NTQR…RSHS, GRSR…RRGR, and NKSRTSQRRSR. Residues serine 700, serine 702, and serine 704 each carry the phosphoserine modification. A phosphoserine mark is found at serine 773, serine 775, and serine 778. A compositionally biased stretch (low complexity) spans 785–817; that stretch reads SQTPTRRSRSGSSPPKQKSKTPPRQSRSNSPQP. Residues serine 821 and serine 829 each carry the phosphoserine modification. 2 stretches are compositionally biased toward polar residues: residues 829-851 and 859-874; these read SVTN…SESS and RTPS…PRVK. Threonine 831 and threonine 841 each carry phosphothreonine. Residues serine 846, serine 850, and serine 851 each carry the phosphoserine modification. Composition is skewed to low complexity over residues 875–891 and 898–919; these read SSTP…SPQP and SPRG…TSRT. Serine 882, serine 909, serine 924, serine 926, serine 928, serine 940, serine 942, serine 944, serine 945, serine 946, and serine 949 each carry phosphoserine. Residue threonine 955 is modified to Phosphothreonine. Residues 960-1000 show a composition bias toward polar residues; the sequence is SGSTSPYLKSMLQTPPDQNLSGSKSPCPQKSRDSPTGSSGS. Phosphoserine occurs at positions 962 and 964. Position 966 is a phosphotyrosine (tyrosine 966). Threonine 973 is subject to Phosphothreonine. Phosphoserine is present on residues serine 980, serine 984, and serine 993. Threonine 995 is modified (phosphothreonine). Residues serine 997, serine 1000, serine 1011, serine 1037, and serine 1038 each carry the phosphoserine modification. Polar residues predominate over residues 1024–1057; it reads VQQKGHTQTWPDTSSPEVMQTQVESPLLQSKSQT. Residues 1024 to 1112 are disordered; sequence VQQKGHTQTW…TKPDSSIYPL (89 aa). A Phosphothreonine modification is found at threonine 1044. 5 positions are modified to phosphoserine: serine 1048, serine 1064, serine 1066, serine 1067, and serine 1068. Low complexity predominate over residues 1058–1068; it reads SPKGSLSRSSS. The residue at position 1071 (threonine 1071) is a Phosphothreonine. A phosphoserine mark is found at serine 1077, serine 1087, serine 1094, serine 1097, serine 1117, serine 1151, serine 1159, serine 1175, serine 1188, serine 1216, serine 1225, serine 1229, serine 1230, serine 1269, serine 1276, serine 1278, serine 1284, serine 1287, serine 1294, serine 1305, serine 1325, serine 1338, serine 1339, serine 1340, serine 1343, serine 1359, and serine 1360. Residues 1079–1092 show a composition bias toward basic and acidic residues; it reads VKQDKSEISTDPKL. The tract at residues 1136 to 2092 is disordered; that stretch reads IQEDVASSCI…RSPGMLEPLG (957 aa). Residues 1146 to 1158 show a composition bias toward basic and acidic residues; it reads PRDKFSPTQDRPE. Over residues 1270–1284 the composition is skewed to basic and acidic residues; it reads PEHKELSHSPPRENS. Residues 1285–1304 are compositionally biased toward polar residues; sequence FESSLEFKNSGPVSEVNTGF. Position 1370 is a phosphothreonine (threonine 1370). Positions 1371–1387 are enriched in basic and acidic residues; that stretch reads PSRERSSSASPELKDGL. Phosphoserine occurs at positions 1372, 1378, and 1380. The residue at position 1390 (threonine 1390) is a Phosphothreonine. The segment covering 1397–1408 has biased composition (low complexity); sequence SGSSPGLRDGSG. 2 positions are modified to phosphoserine: serine 1400 and serine 1407. The residue at position 1409 (threonine 1409) is a Phosphothreonine. Residues 1409–1431 are compositionally biased toward polar residues; the sequence is TPSRHSLSGSSPGMKDTPQTPSR. Phosphoserine occurs at positions 1414, 1416, 1418, and 1419. Position 1428 is a phosphothreonine (threonine 1428). Serine 1438 and serine 1439 each carry phosphoserine. A Phosphothreonine modification is found at threonine 1448. Phosphoserine is present on residues serine 1453, serine 1455, serine 1457, serine 1458, and serine 1465. Over residues 1454 to 1468 the composition is skewed to polar residues; sequence HSPSSPERNNKSVTP. Residue threonine 1467 is modified to Phosphothreonine. A phosphoserine mark is found at serine 1473, serine 1475, serine 1477, and serine 1478. Residues 1475–1489 show a composition bias toward polar residues; the sequence is SESSVEQKNLARTSP. Threonine 1487 carries the phosphothreonine modification. Residues 1490-1499 are compositionally biased toward low complexity; the sequence is GQRSRSGSSQ. Serine 1493, serine 1495, serine 1497, serine 1498, and serine 1508 each carry phosphoserine. Residues 1511–1523 show a composition bias toward basic and acidic residues; it reads ERSESDSSPDSKP. Positions 1524–1533 are enriched in basic residues; that stretch reads KTRTPLRQRS. Phosphoserine occurs at positions 1533, 1535, 1537, 1538, 1554, 1556, 1557, 1572, 1576, 1577, 1604, 1614, 1647, 1649, and 1650. The segment covering 1604 to 1613 has biased composition (low complexity); that stretch reads SPEGSSSSES. A compositionally biased stretch (basic residues) spans 1637–1647; the sequence is KSHTPPRRRSS. Threonine 1654 carries the post-translational modification Phosphothreonine. Phosphoserine is present on residues serine 1683, serine 1685, serine 1687, serine 1688, serine 1718, and serine 1720. Basic residues-rich tracts occupy residues 1725 to 1745 and 1754 to 1772; these read GLQR…RRRD and SRRR…RRRG. A phosphoserine mark is found at serine 1774, serine 1778, serine 1810, serine 1813, serine 1832, and serine 1834. Residues 1776–1789 are compositionally biased toward low complexity; the sequence is YHSRSPTRQESSRT. A compositionally biased stretch (basic residues) spans 1790–1810; it reads SSRRRRGRSRTPLTSRKRSRS. Basic residues predominate over residues 1818 to 2020; sequence KRSRSRASPA…PRAARGKRSL (203 aa). At threonine 1836 the chain carries Phosphothreonine. Residues serine 1840 and serine 1846 each carry the phosphoserine modification. Threonine 1848 carries the phosphothreonine modification. Phosphoserine occurs at positions 1849, 1869, 1872, 1876, and 1878. Phosphothreonine occurs at positions 1880 and 1884. Phosphoserine occurs at positions 1898 and 1900. A phosphothreonine mark is found at threonine 1902 and threonine 1906. 2 positions are modified to phosphoserine: serine 1910 and serine 1912. Phosphothreonine occurs at positions 1914 and 1918. Residues serine 1922, serine 1924, and serine 1927 each carry the phosphoserine modification. Threonine 1930 is subject to Phosphothreonine. Phosphoserine is present on residues serine 1936, serine 1939, serine 1948, serine 1951, serine 1960, serine 1963, serine 1970, and serine 1972. At threonine 1974 the chain carries Phosphothreonine. Serine 1982 and serine 1984 each carry phosphoserine. Threonine 1986 carries the phosphothreonine modification. Phosphoserine is present on residues serine 1994, serine 1996, serine 1998, and serine 2019. Threonine 2021 carries the post-translational modification Phosphothreonine. A compositionally biased stretch (low complexity) spans 2022–2047; the sequence is RSPPAIRRRSASGSSSDRSRSATPPA. Serine 2023 and serine 2042 each carry phosphoserine. Threonine 2044 carries the post-translational modification Phosphothreonine. Phosphoserine occurs at positions 2052 and 2054. Residue threonine 2056 is modified to Phosphothreonine. A compositionally biased stretch (low complexity) spans 2062-2076; that stretch reads SSSRMSCFSRPSMSP. A phosphoserine mark is found at serine 2070, serine 2073, serine 2075, and serine 2084. Threonine 2096 bears the Phosphothreonine mark. Arginine 2146, arginine 2159, arginine 2183, and arginine 2198 each carry omega-N-methylarginine. Serine 2224 carries the phosphoserine modification. Residues arginine 2226 and arginine 2240 each carry the omega-N-methylarginine modification. Phosphothreonine occurs at positions 2241 and 2254. Serine 2262 is subject to Phosphoserine. The disordered stretch occupies residues 2263-2703; the sequence is LTGSGTPPTA…SNRHRSSRSP (441 aa). Threonine 2268 and threonine 2281 each carry phosphothreonine. Residues 2269-2283 are compositionally biased toward polar residues; it reads PPTAANYPSSSRTPQ. The residue at position 2295 (arginine 2295) is an Omega-N-methylarginine. 3 positions are modified to phosphoserine: serine 2296, serine 2321, and serine 2329. A Phosphothreonine modification is found at threonine 2334. A Phosphoserine modification is found at serine 2335. Arginine 2337 bears the Asymmetric dimethylarginine; alternate mark. At arginine 2337 the chain carries Omega-N-methylarginine; alternate. Serine 2347, serine 2351, and serine 2360 each carry phosphoserine. Threonine 2362 is subject to Phosphothreonine. Residues serine 2365, serine 2368, serine 2381, serine 2384, serine 2404, and serine 2408 each carry the phosphoserine modification. 2 stretches are compositionally biased toward polar residues: residues 2410–2443 and 2467–2476; these read FSDQ…SASD and TGAQQPSTLA. Residues 2487–2521 show a composition bias toward low complexity; sequence SSSSSSSSSSSSSSSSSSSSSSSSGSSSSDSEGSS. Serine 2535 is subject to Phosphoserine. Threonine 2537 carries the post-translational modification Phosphothreonine. A Glycyl lysine isopeptide (Lys-Gly) (interchain with G-Cter in SUMO2) cross-link involves residue lysine 2541. At threonine 2553 the chain carries Phosphothreonine. A compositionally biased stretch (low complexity) spans 2562-2602; sequence SSSSSSSSSSSSSSSSSSSSSSSSSSSSSSSSSSSSSSSSS. Positions 2605-2622 are enriched in pro residues; that stretch reads PAKPGPQALPKPASPKKP. Phosphoserine occurs at positions 2618, 2629, 2631, 2638, 2642, 2644, 2646, 2648, 2656, and 2660. Residues 2623 to 2643 are compositionally biased toward basic and acidic residues; it reads PPGERRSRSPRKPIDSLRDSR. Threonine 2689 bears the Phosphothreonine mark. The residue at position 2691 (serine 2691) is a Phosphoserine. The span at 2694 to 2703 shows a compositional bias: basic residues; that stretch reads SNRHRSSRSP.

This sequence belongs to the CWC21 family. Component of pre-catalytic, catalytic and post-catalytic spliceosome complexes. Found in a pre-mRNA splicing complex with SFRS4, SFRS5, SNRP70, SNRPA1, SRRM1 and SRRM2. Component of the minor spliceosome, which splices U12-type introns. Interacts with DHX8. Interacts with CACTIN.

It localises to the nucleus. The protein localises to the nucleus speckle. Required for pre-mRNA splicing as component of the spliceosome. As a component of the minor spliceosome, involved in the splicing of U12-type introns in pre-mRNAs. The protein is Serine/arginine repetitive matrix protein 2 (Srrm2) of Mus musculus (Mouse).